The primary structure comprises 65 residues: Large ribosomal subunit protein bL35 (65 aa).

It belongs to the bacterial ribosomal protein bL35 family.

This chain is Large ribosomal subunit protein bL35, found in Baumannia cicadellinicola subsp. Homalodisca coagulata.